Here is a 139-residue protein sequence, read N- to C-terminus: Transcription antitermination protein NusB (139 aa).

The protein belongs to the NusB family.

Its function is as follows. Involved in transcription antitermination. Required for transcription of ribosomal RNA (rRNA) genes. Binds specifically to the boxA antiterminator sequence of the ribosomal RNA (rrn) operons. The protein is Transcription antitermination protein NusB of Klebsiella pneumoniae (strain 342).